We begin with the raw amino-acid sequence, 190 residues long: Double zinc ribbon protein MJ0416 (190 aa).

The DZANK-type zinc finger occupies 134–183 (CPNCNNYISDSWKYCAHCGAKLKEEEEEVLRCPNCKRPVQPEWIVCPYCG).

The sequence is that of Double zinc ribbon protein MJ0416 from Methanocaldococcus jannaschii (strain ATCC 43067 / DSM 2661 / JAL-1 / JCM 10045 / NBRC 100440) (Methanococcus jannaschii).